The primary structure comprises 288 residues: Tryptophan 2,3-dioxygenase (288 aa).

Residues 57–61 (FIIQH), tyrosine 119, and arginine 123 contribute to the substrate site. Heme is bound at residue histidine 246. Threonine 260 contacts substrate.

This sequence belongs to the tryptophan 2,3-dioxygenase family. In terms of assembly, homotetramer. The cofactor is heme.

It carries out the reaction L-tryptophan + O2 = N-formyl-L-kynurenine. The protein operates within amino-acid degradation; L-tryptophan degradation via kynurenine pathway; L-kynurenine from L-tryptophan: step 1/2. Its function is as follows. Heme-dependent dioxygenase that catalyzes the oxidative cleavage of the L-tryptophan (L-Trp) pyrrole ring and converts L-tryptophan to N-formyl-L-kynurenine. Catalyzes the oxidative cleavage of the indole moiety. The sequence is that of Tryptophan 2,3-dioxygenase from Pseudomonas aeruginosa (strain UCBPP-PA14).